The sequence spans 318 residues: Mitochondrial coenzyme A transporter SLC25A42 (318 aa).

Solcar repeat units follow at residues 31-117 (RQVL…YKRI), 129-214 (LPPW…LKSL), and 224-312 (PYPF…MQIL). Helical transmembrane passes span 33-53 (VLSS…AVAP), 89-109 (LWRG…IQFS), 135-155 (LLAG…LDLV), 186-206 (LYFG…LSFF), 230-250 (MVFG…LDVV), and 293-313 (LKGP…QILL).

It belongs to the mitochondrial carrier (TC 2.A.29) family.

The protein resides in the mitochondrion inner membrane. It carries out the reaction ADP(out) + CoA(in) = ADP(in) + CoA(out). It catalyses the reaction 3'-dephospho-CoA(in) + ADP(out) = 3'-dephospho-CoA(out) + ADP(in). The enzyme catalyses adenosine 3',5'-bisphosphate(in) + ADP(out) = adenosine 3',5'-bisphosphate(out) + ADP(in). The catalysed reaction is AMP(in) + ADP(out) = AMP(out) + ADP(in). It carries out the reaction dADP(in) + ADP(out) = dADP(out) + ADP(in). It catalyses the reaction ADP(in) + ATP(out) = ADP(out) + ATP(in). In terms of biological role, mitochondrial carrier mediating the transport of coenzyme A (CoA) in mitochondria in exchange for intramitochondrial (deoxy)adenine nucleotides and adenosine 3',5'-diphosphate. This is Mitochondrial coenzyme A transporter SLC25A42 (Slc25a42) from Mus musculus (Mouse).